The following is a 249-amino-acid chain: DNA polymerase sliding clamp (249 aa).

This sequence belongs to the PCNA family. Homotrimer. The subunits circularize to form a toroid; DNA passes through its center. Replication factor C (RFC) is required to load the toroid on the DNA.

In terms of biological role, sliding clamp subunit that acts as a moving platform for DNA processing. Responsible for tethering the catalytic subunit of DNA polymerase and other proteins to DNA during high-speed replication. The protein is DNA polymerase sliding clamp of Thermococcus gammatolerans (strain DSM 15229 / JCM 11827 / EJ3).